The chain runs to 467 residues: Ribosomal protein uS12 methylthiotransferase RimO (467 aa).

Positions 1-110 (MDLHGCAKNQ…LPQLIDSMFP (110 aa)) constitute an MTTase N-terminal domain. [4Fe-4S] cluster-binding residues include C6, C42, C73, C153, C157, and C160. The region spanning 139–386 (LNFPRSTYIK…QNAQTSITEK (248 aa)) is the Radical SAM core domain. The TRAM domain occupies 389–467 (DSFIGKEIEV…NGFDLEAVAV (79 aa)).

This sequence belongs to the methylthiotransferase family. RimO subfamily. It depends on [4Fe-4S] cluster as a cofactor.

The protein localises to the cytoplasm. The catalysed reaction is L-aspartate(89)-[ribosomal protein uS12]-hydrogen + (sulfur carrier)-SH + AH2 + 2 S-adenosyl-L-methionine = 3-methylsulfanyl-L-aspartate(89)-[ribosomal protein uS12]-hydrogen + (sulfur carrier)-H + 5'-deoxyadenosine + L-methionine + A + S-adenosyl-L-homocysteine + 2 H(+). Its function is as follows. Catalyzes the methylthiolation of an aspartic acid residue of ribosomal protein uS12. The protein is Ribosomal protein uS12 methylthiotransferase RimO of Treponema denticola (strain ATCC 35405 / DSM 14222 / CIP 103919 / JCM 8153 / KCTC 15104).